The following is a 678-amino-acid chain: Protein hook (678 aa).

The interaction with microtubules stretch occupies residues 1–155 (MSTQNGMYYS…NIMRALQELE (155 aa)). Residues 5–123 (NGMYYSLLEW…RLLQLVLGCA (119 aa)) enclose the Calponin-homology (CH) domain. Coiled coils occupy residues 135-435 (EIMC…LKCG) and 479-589 (QTAL…AKEV).

Belongs to the hook family. Homodimer. Interacts with microtubules via its N-terminus.

Its subcellular location is the cytoplasm. The protein resides in the cytoskeleton. It localises to the endosome. The protein localises to the synapse. Its function is as follows. Involved in endocytic trafficking by stabilizing organelles of the endocytic pathway. Probably acts as a cytoskeletal linker protein required to tether endosome vesicles to the cytoskeleton. Involved in modulation of endocytosis at stages required for down-regulation of membrane proteins that control synapse size. Not involved in synaptic vesicle recycling. Required in R7 cells for boss endocytosis into multivesicular bodies (MVBs). Has a role in regulating adult longevity. This chain is Protein hook, found in Drosophila virilis (Fruit fly).